The chain runs to 103 residues: N(4)-acetylcytidine amidohydrolase (103 aa).

Positions 6 to 92 (TFFERFEQDI…VIQEIYPGLE (87 aa)) constitute an ASCH domain. Catalysis depends on lysine 20, which acts as the Proton acceptor. Threonine 23 functions as the Nucleophile in the catalytic mechanism. Glutamate 73 acts as the Proton donor in catalysis.

It belongs to the N(4)-acetylcytidine amidohydrolase family.

It carries out the reaction N(4)-acetylcytidine + H2O = cytidine + acetate + H(+). It catalyses the reaction N(4)-acetyl-2'-deoxycytidine + H2O = 2'-deoxycytidine + acetate + H(+). The enzyme catalyses N(4)-acetylcytosine + H2O = cytosine + acetate + H(+). Catalyzes the hydrolysis of N(4)-acetylcytidine (ac4C). This Shewanella sp. (strain MR-4) protein is N(4)-acetylcytidine amidohydrolase.